The following is a 397-amino-acid chain: Oxysterol-binding protein homolog C354.07c (397 aa).

Residues Asn-186 and Asn-195 are each glycosylated (N-linked (GlcNAc...) asparagine).

This sequence belongs to the OSBP family.

Its subcellular location is the endoplasmic reticulum. This chain is Oxysterol-binding protein homolog C354.07c, found in Schizosaccharomyces pombe (strain 972 / ATCC 24843) (Fission yeast).